A 253-amino-acid polypeptide reads, in one-letter code: Polyhedrin (253 aa).

Functionally, major component of the virus occlusion bodies, which are large proteinaceous structures (polyhedra), that protect the virus from the outside environment for extended periods until they are ingested by insect larvae. The polypeptide is Polyhedrin (Orgyia pseudotsugata cypovirus (OpCPV)).